The chain runs to 1436 residues: Gag-Pol polyprotein (1436 aa).

G2 carries the N-myristoyl glycine; by host lipid modification. The tract at residues 7 to 31 (VLSGGKLDAWEKIRLRPGGRKKYRL) is interaction with Gp41. Positions 8-43 (LSGGKLDAWEKIRLRPGGRKKYRLKHLVWASRELER) are interaction with host CALM1. The interaction with host AP3D1 stretch occupies residues 12-19 (KLDAWEKI). The segment at 14–33 (DAWEKIRLRPGGRKKYRLKH) is interaction with membrane phosphatidylinositol 4,5-bisphosphate and RNA. Positions 16–22 (WEKIRLR) match the Nuclear export signal motif. Residues 26-32 (RKKYRLK) carry the Nuclear localization signal motif. Positions 73–77 (EDLQS) are interaction with membrane phosphatidylinositol 4,5-bisphosphate. The tract at residues 110–129 (KNKQRTQQAPAAADKEKDSK) is disordered. Phosphotyrosine; by host is present on Y134. Residues 191–229 (NTVGGHQAAMQMLKDTINEEAAEWDRLHPVHAGPIPPGQ) form an interaction with human PPIA/CYPA and NUP153 region. The tract at residues 279–365 (YSPVSILDIK…GGPSHKARVL (87 aa)) is dimerization/Multimerization of capsid protein p24. 2 CCHC-type zinc fingers span residues 393–410 (VKCS…NCRA) and 414–431 (KGCW…DCTG). 2 stretches are compositionally biased toward basic and acidic residues: residues 447-457 (KAREFPPEEAR) and 464-475 (RELRVRRGDHPL). Residues 447–482 (KAREFPPEEARANSPTSRELRVRRGDHPLSEAGAER) form a disordered region. The interval 490–494 (PQITL) is dimerization of protease. The Peptidase A2 domain occupies 509–578 (KEALLDTGAD…TPVNIIGRNI (70 aa)). Catalysis depends on D514, which acts as the For protease activity; shared with dimeric partner. 2 dimerization of protease regions span residues 538–544 (GIGGFIK) and 577–589 (NILT…LNLP). The Reverse transcriptase domain maps to 632–822 (EGKISKIGPE…PPFLWMGYEL (191 aa)). D698, D773, and D774 together coordinate Mg(2+). Residues 815–823 (FLWMGYELH) are RT 'primer grip'. The short motif at 986 to 1002 (WETWWTEHWQATWIPEW) is the Tryptophan repeat motif element. One can recognise an RNase H type-1 domain in the interval 1022–1145 (IEGAETYYVD…VDKLVSSGIR (124 aa)). Residues D1031, E1066, D1086, and D1137 each contribute to the Mg(2+) site. The Integrase-type zinc-finger motif lies at 1151–1192 (DGIDKAQVQHEKYHSNWRAMASDFNLPPIVAKEIVASCDKCQ). 4 residues coordinate Zn(2+): H1160, H1164, C1188, and C1191. The Integrase catalytic domain maps to 1202–1352 (VDCSPGIWQL…SARERIIDII (151 aa)). D1212, D1264, and E1300 together coordinate Mg(2+). The integrase-type DNA-binding region spans 1371 to 1418 (FRVYYRDSRDPIWKGPAKLLWKGEGAVVIQDNSEIKVVPRRKAKIIRD).

In terms of assembly, homotrimer; further assembles as hexamers of trimers. Interacts with gp41 (via C-terminus). Interacts with host CALM1; this interaction induces a conformational change in the Matrix protein, triggering exposure of the myristate group. Interacts with host AP3D1; this interaction allows the polyprotein trafficking to multivesicular bodies during virus assembly. Part of the pre-integration complex (PIC) which is composed of viral genome, matrix protein, Vpr and integrase. Homodimer; the homodimer further multimerizes as homohexamers or homopentamers. Interacts with human PPIA/CYPA; This interaction stabilizes the capsid. Interacts with human NUP153. Interacts with host PDZD8; this interaction stabilizes the capsid. Interacts with monkey TRIM5; this interaction destabilizes the capsid. As to quaternary structure, homodimer, whose active site consists of two apposed aspartic acid residues. In terms of assembly, heterodimer of p66 RT and p51 RT (RT p66/p51). Heterodimerization of RT is essential for DNA polymerase activity. The overall folding of the subdomains is similar in p66 RT and p51 RT but the spatial arrangements of the subdomains are dramatically different. Homotetramer; may further associate as a homohexadecamer. Part of the pre-integration complex (PIC) which is composed of viral genome, matrix protein, Vpr and integrase. Interacts with human SMARCB1/INI1 and human PSIP1/LEDGF isoform 1. Interacts with human KPNA3; this interaction might play a role in nuclear import of the pre-integration complex. Interacts with human NUP153; this interaction might play a role in nuclear import of the pre-integration complex. Requires Mg(2+) as cofactor. In terms of processing, specific enzymatic cleavages by the viral protease yield mature proteins. The protease is released by autocatalytic cleavage. The polyprotein is cleaved during and after budding, this process is termed maturation. Proteolytic cleavage of p66 RT removes the RNase H domain to yield the p51 RT subunit. Nucleocapsid protein p7 might be further cleaved after virus entry. Tyrosine phosphorylated presumably in the virion by a host kinase. Phosphorylation is apparently not a major regulator of membrane association. Post-translationally, phosphorylated possibly by host MAPK1; this phosphorylation is necessary for Pin1-mediated virion uncoating. In terms of processing, methylated by host PRMT6, impairing its function by reducing RNA annealing and the initiation of reverse transcription.

It is found in the host cell membrane. The protein resides in the host endosome. Its subcellular location is the host multivesicular body. It localises to the virion membrane. The protein localises to the host nucleus. It is found in the host cytoplasm. The protein resides in the virion. The catalysed reaction is Specific for a P1 residue that is hydrophobic, and P1' variable, but often Pro.. The enzyme catalyses Endohydrolysis of RNA in RNA/DNA hybrids. Three different cleavage modes: 1. sequence-specific internal cleavage of RNA. Human immunodeficiency virus type 1 and Moloney murine leukemia virus enzymes prefer to cleave the RNA strand one nucleotide away from the RNA-DNA junction. 2. RNA 5'-end directed cleavage 13-19 nucleotides from the RNA end. 3. DNA 3'-end directed cleavage 15-20 nucleotides away from the primer terminus.. It catalyses the reaction 3'-end directed exonucleolytic cleavage of viral RNA-DNA hybrid.. It carries out the reaction DNA(n) + a 2'-deoxyribonucleoside 5'-triphosphate = DNA(n+1) + diphosphate. Protease: The viral protease is inhibited by many synthetic protease inhibitors (PIs), such as amprenavir, atazanavir, indinavir, loprinavir, nelfinavir, ritonavir and saquinavir. Use of protease inhibitors in tritherapy regimens permit more ambitious therapeutic strategies. Reverse transcriptase/ribonuclease H: RT can be inhibited either by nucleoside RT inhibitors (NRTIs) or by non nucleoside RT inhibitors (NNRTIs). NRTIs act as chain terminators, whereas NNRTIs inhibit DNA polymerization by binding a small hydrophobic pocket near the RT active site and inducing an allosteric change in this region. Classical NRTIs are abacavir, adefovir (PMEA), didanosine (ddI), lamivudine (3TC), stavudine (d4T), tenofovir (PMPA), zalcitabine (ddC), and zidovudine (AZT). Classical NNRTIs are atevirdine (BHAP U-87201E), delavirdine, efavirenz (DMP-266), emivirine (I-EBU), and nevirapine (BI-RG-587). The tritherapies used as a basic effective treatment of AIDS associate two NRTIs and one NNRTI. In terms of biological role, mediates, with Gag polyprotein, the essential events in virion assembly, including binding the plasma membrane, making the protein-protein interactions necessary to create spherical particles, recruiting the viral Env proteins, and packaging the genomic RNA via direct interactions with the RNA packaging sequence (Psi). Gag-Pol polyprotein may regulate its own translation, by the binding genomic RNA in the 5'-UTR. At low concentration, the polyprotein would promote translation, whereas at high concentration, the polyprotein would encapsidate genomic RNA and then shut off translation. Functionally, targets the polyprotein to the plasma membrane via a multipartite membrane-binding signal, that includes its myristoylated N-terminus. Matrix protein is part of the pre-integration complex. Implicated in the release from host cell mediated by Vpu. Binds to RNA. Its function is as follows. Forms the conical core that encapsulates the genomic RNA-nucleocapsid complex in the virion. Most core are conical, with only 7% tubular. The core is constituted by capsid protein hexamer subunits. The core is disassembled soon after virion entry. Host restriction factors such as TRIM5-alpha or TRIMCyp bind retroviral capsids and cause premature capsid disassembly, leading to blocks in reverse transcription. Capsid restriction by TRIM5 is one of the factors which restricts HIV-1 to the human species. Host PIN1 apparently facilitates the virion uncoating. On the other hand, interactions with PDZD8 or CYPA stabilize the capsid. Encapsulates and protects viral dimeric unspliced genomic RNA (gRNA). Binds these RNAs through its zinc fingers. Acts as a nucleic acid chaperone which is involved in rearangement of nucleic acid secondary structure during gRNA retrotranscription. Also facilitates template switch leading to recombination. As part of the polyprotein, participates in gRNA dimerization, packaging, tRNA incorporation and virion assembly. In terms of biological role, aspartyl protease that mediates proteolytic cleavages of Gag and Gag-Pol polyproteins during or shortly after the release of the virion from the plasma membrane. Cleavages take place as an ordered, step-wise cascade to yield mature proteins. This process is called maturation. Displays maximal activity during the budding process just prior to particle release from the cell. Also cleaves Nef and Vif, probably concomitantly with viral structural proteins on maturation of virus particles. Hydrolyzes host EIF4GI and PABP1 in order to shut off the capped cellular mRNA translation. The resulting inhibition of cellular protein synthesis serves to ensure maximal viral gene expression and to evade host immune response. Also mediates cleavage of host YTHDF3. Mediates cleavage of host CARD8, thereby activating the CARD8 inflammasome, leading to the clearance of latent HIV-1 in patient CD4(+) T-cells after viral reactivation; in contrast, HIV-1 can evade CARD8-sensing when its protease remains inactive in infected cells prior to viral budding. Functionally, multifunctional enzyme that converts the viral RNA genome into dsDNA in the cytoplasm, shortly after virus entry into the cell. This enzyme displays a DNA polymerase activity that can copy either DNA or RNA templates, and a ribonuclease H (RNase H) activity that cleaves the RNA strand of RNA-DNA heteroduplexes in a partially processive 3' to 5' endonucleasic mode. Conversion of viral genomic RNA into dsDNA requires many steps. A tRNA(3)-Lys binds to the primer-binding site (PBS) situated at the 5'-end of the viral RNA. RT uses the 3' end of the tRNA primer to perform a short round of RNA-dependent minus-strand DNA synthesis. The reading proceeds through the U5 region and ends after the repeated (R) region which is present at both ends of viral RNA. The portion of the RNA-DNA heteroduplex is digested by the RNase H, resulting in a ssDNA product attached to the tRNA primer. This ssDNA/tRNA hybridizes with the identical R region situated at the 3' end of viral RNA. This template exchange, known as minus-strand DNA strong stop transfer, can be either intra- or intermolecular. RT uses the 3' end of this newly synthesized short ssDNA to perform the RNA-dependent minus-strand DNA synthesis of the whole template. RNase H digests the RNA template except for two polypurine tracts (PPTs) situated at the 5'-end and near the center of the genome. It is not clear if both polymerase and RNase H activities are simultaneous. RNase H probably can proceed both in a polymerase-dependent (RNA cut into small fragments by the same RT performing DNA synthesis) and a polymerase-independent mode (cleavage of remaining RNA fragments by free RTs). Secondly, RT performs DNA-directed plus-strand DNA synthesis using the PPTs that have not been removed by RNase H as primers. PPTs and tRNA primers are then removed by RNase H. The 3' and 5' ssDNA PBS regions hybridize to form a circular dsDNA intermediate. Strand displacement synthesis by RT to the PBS and PPT ends produces a blunt ended, linear dsDNA copy of the viral genome that includes long terminal repeats (LTRs) at both ends. Its function is as follows. Catalyzes viral DNA integration into the host chromosome, by performing a series of DNA cutting and joining reactions. This enzyme activity takes place after virion entry into a cell and reverse transcription of the RNA genome in dsDNA. The first step in the integration process is 3' processing. This step requires a complex comprising the viral genome, matrix protein, Vpr and integrase. This complex is called the pre-integration complex (PIC). The integrase protein removes 2 nucleotides from each 3' end of the viral DNA, leaving recessed CA OH's at the 3' ends. In the second step, the PIC enters cell nucleus. This process is mediated through integrase and Vpr proteins, and allows the virus to infect a non dividing cell. This ability to enter the nucleus is specific of lentiviruses, other retroviruses cannot and rely on cell division to access cell chromosomes. In the third step, termed strand transfer, the integrase protein joins the previously processed 3' ends to the 5' ends of strands of target cellular DNA at the site of integration. The 5'-ends are produced by integrase-catalyzed staggered cuts, 5 bp apart. A Y-shaped, gapped, recombination intermediate results, with the 5'-ends of the viral DNA strands and the 3' ends of target DNA strands remaining unjoined, flanking a gap of 5 bp. The last step is viral DNA integration into host chromosome. This involves host DNA repair synthesis in which the 5 bp gaps between the unjoined strands are filled in and then ligated. Since this process occurs at both cuts flanking the HIV genome, a 5 bp duplication of host DNA is produced at the ends of HIV-1 integration. Alternatively, Integrase may catalyze the excision of viral DNA just after strand transfer, this is termed disintegration. The sequence is that of Gag-Pol polyprotein (gag-pol) from Human immunodeficiency virus type 1 group M subtype H (isolate VI991) (HIV-1).